A 393-amino-acid polypeptide reads, in one-letter code: Cholinephosphotransferase 1 (393 aa).

Residues 1-40 (MGFFIPQSSLGNLKLYKYQSDDRSFLSNHVLRPFWRKFAT) lie on the Lumenal side of the membrane. The helical transmembrane segment at 41 to 61 (IFPLWMAPNLVTLLGFCFIIF) threads the bilayer. Topologically, residues 62-172 (NVLTTLYYDP…YHTHKLYLAE (111 aa)) are cytoplasmic. A helical transmembrane segment spans residues 173-193 (FCGPVEGIIVLCISFIAVGIY). Residues 194 to 210 (GPQTIWHTKVAQFSWQD) are Lumenal-facing. The helical transmembrane segment at 211–231 (FVFDVETVHLMYAFCTGALIF) threads the bilayer. Residues 232–263 (NIVTAHTNVVRYYESQSTKSATPSKTAENISK) lie on the Cytoplasmic side of the membrane. The helical transmembrane segment at 264 to 284 (AVNGLLPFFAYFSSIFTLVLI) threads the bilayer. Position 285 (glutamine 285) is a topological domain, lumenal. The chain crosses the membrane as a helical span at residues 286-306 (PSFISLALILSIGFSVAFVVG). Over 307-320 (RMIIAHLTMQPFPM) the chain is Cytoplasmic. The helical transmembrane segment at 321-341 (VNFPFLIPTIQLVLYAFMVYV) threads the bilayer. Residues 342-348 (LDYQKGS) lie on the Lumenal side of the membrane. The helical transmembrane segment at 349–369 (IVSALVWMGLGLTLAIHGMFI) threads the bilayer. At 370–393 (NDIIYDITTFLDIYALSIKHPKEI) the chain is on the cytoplasmic side.

It belongs to the CDP-alcohol phosphatidyltransferase class-I family. It depends on Mg(2+) as a cofactor.

It is found in the microsome membrane. The protein resides in the endoplasmic reticulum membrane. Its subcellular location is the mitochondrion outer membrane. The catalysed reaction is CDP-choline + a 1,2-diacyl-sn-glycerol = a 1,2-diacyl-sn-glycero-3-phosphocholine + CMP + H(+). It catalyses the reaction CDP-N,N-dimethylethanolamine + a 1,2-diacyl-sn-glycerol = a 1,2-diacyl-sn-glycero-3-phospho-N,N-dimethylethanolamine + CMP + H(+). It functions in the pathway phospholipid metabolism; phosphatidylcholine biosynthesis; phosphatidylcholine from phosphocholine: step 2/2. Requires a divalent cation activator, and is inhibited by CMP. Activated by phospholipids, especially phosphatidylcholine. In terms of biological role, catalyzes the final step in the CDP-choline route leading to phosphatidylcholin (PC). Preferentially uses CDP-monomethylethanolamine as aminoalcohol substrate. Shows highest activity toward di- and mono-unsaturated diacylglycerol species as lipid substrates. The CDP-choline pathway only contributes to net PC synthesis if exogenous choline is present. In its absence, this pathway recycles choline from PC turnover and may contribute to maintaining the proper PC species composition. The sequence is that of Cholinephosphotransferase 1 (CPT1) from Saccharomyces cerevisiae (strain ATCC 204508 / S288c) (Baker's yeast).